Reading from the N-terminus, the 234-residue chain is Probable RNA/DNA demethylase ALKBH6 (234 aa).

The Fe2OG dioxygenase domain maps to 96-222; the sequence is TANHVLVNEY…RVSLTIRHVP (127 aa). The 2-oxoglutarate site is built by Asn103 and Tyr105. Fe cation is bound by residues His114, Asp116, and His180. Positions 213 and 215 each coordinate 2-oxoglutarate.

It belongs to the alkB family. Fe(2+) is required as a cofactor.

It localises to the cytoplasm. The protein resides in the nucleus. In terms of biological role, probable Fe(2+)/2-oxoglutarate-dependent dioxygenase involved in oxidative demethylation of nucleic acids. Binds nucleic acids with a preference for ssDNA or ssRNA to other types of DNAs. May play a role in nucleic acid damage repair. In Danio rerio (Zebrafish), this protein is Probable RNA/DNA demethylase ALKBH6 (alkbh6).